We begin with the raw amino-acid sequence, 299 residues long: ATP phosphoribosyltransferase (299 aa).

Belongs to the ATP phosphoribosyltransferase family. Long subfamily. In terms of assembly, equilibrium between an active dimeric form, an inactive hexameric form and higher aggregates. Interconversion between the various forms is largely reversible and is influenced by the natural substrates and inhibitors of the enzyme. Requires Mg(2+) as cofactor.

It is found in the cytoplasm. It carries out the reaction 1-(5-phospho-beta-D-ribosyl)-ATP + diphosphate = 5-phospho-alpha-D-ribose 1-diphosphate + ATP. It participates in amino-acid biosynthesis; L-histidine biosynthesis; L-histidine from 5-phospho-alpha-D-ribose 1-diphosphate: step 1/9. Its activity is regulated as follows. Feedback inhibited by histidine. Catalyzes the condensation of ATP and 5-phosphoribose 1-diphosphate to form N'-(5'-phosphoribosyl)-ATP (PR-ATP). Has a crucial role in the pathway because the rate of histidine biosynthesis seems to be controlled primarily by regulation of HisG enzymatic activity. The polypeptide is ATP phosphoribosyltransferase (Blochmanniella floridana).